The following is a 611-amino-acid chain: Actin-interacting protein 1 (611 aa).

WD repeat units lie at residues 57-96 (EHSH…HILK), 145-185 (GQAR…FKST), 188-227 (EHTK…KTGV), 237-276 (AHSG…VEKT), 322-361 (GHNK…SNRV), 446-485 (PISY…VSEV), 489-528 (VHPA…ELAH), 534-573 (FHTA…DHPI), and 579-610 (HAMS…WNVP).

Belongs to the WD repeat AIP1 family.

Its subcellular location is the cytoplasm. It is found in the cytoskeleton. Its function is as follows. Induces disassembly of actin filaments in conjunction with ADF/cofilin family proteins. Regulator of actin organization in myofibrils. The sequence is that of Actin-interacting protein 1 (unc-78) from Caenorhabditis elegans.